We begin with the raw amino-acid sequence, 137 residues long: ATP synthase epsilon chain (137 aa).

The protein belongs to the ATPase epsilon chain family. As to quaternary structure, F-type ATPases have 2 components, CF(1) - the catalytic core - and CF(0) - the membrane proton channel. CF(1) has five subunits: alpha(3), beta(3), gamma(1), delta(1), epsilon(1). CF(0) has three main subunits: a, b and c.

The protein localises to the cell membrane. Its function is as follows. Produces ATP from ADP in the presence of a proton gradient across the membrane. This is ATP synthase epsilon chain from Caldicellulosiruptor bescii (strain ATCC BAA-1888 / DSM 6725 / KCTC 15123 / Z-1320) (Anaerocellum thermophilum).